A 694-amino-acid chain; its full sequence is Follicle-stimulating hormone receptor (694 aa).

The N-terminal stretch at 1–17 (MALLLVSLLAFLGSGAG) is a signal peptide. 2 cysteine pairs are disulfide-bonded: Cys18–Cys25 and Cys23–Cys32. Residues 18-46 (CHHWLCHCSDRVFLCQDSKVTEIPPDLPR) form the LRRNT domain. The Extracellular segment spans residues 18–365 (CHHWLCHCSD…EDIMGYNILR (348 aa)). 9 LRR repeats span residues 49–72 (IELRFVLTKLRVIPQGSFSGFKDL), 73–97 (EKIEISQNDVLEVIEADVFSNLPKL), 98–118 (HEIRIERANTLLYINPEAFQN), 119–143 (LPNLRYLLISNTGIKHLPVVHKIQS), 144–169 (LQKVLLDIQDNINLHTIARNSFMGLS), 170–192 (FDSLILWLNKNGIQEIHNCAFNG), 193–216 (TQLDELNLSDNNNLEELPNDVFRG), 217–240 (ASGPVILDISRTKVHSLPSHGLEN), and 241–259 (LKKLRARSTYSLKKLPSLD). N-linked (GlcNAc...) asparagine glycosylation is found at Asn191 and Asn199. 4 disulfide bridges follow: Cys275-Cys345, Cys276-Cys292, Cys276-Cys355, and Cys292-Cys337. Residues Asn293 and Asn311 are each glycosylated (N-linked (GlcNAc...) asparagine). A helical transmembrane segment spans residues 366 to 386 (VLIWFISILAITGNITVLVIL). Over 387–397 (TTSQYKLTVPR) the chain is Cytoplasmic. A helical membrane pass occupies residues 398-420 (FLMCNLAFADLCIGIYLLPIASV). The Extracellular segment spans residues 421-442 (DIHTKSQYHNYAIDWQTAVGCD). A disulfide bond links Cys441 and Cys516. A helical membrane pass occupies residues 443 to 464 (AAGFFTAFASELSVYTLTAIPL). Residues 465–484 (ERWHTITHAMQLERKVQLRH) lie on the Cytoplasmic side of the membrane. A helical membrane pass occupies residues 485-507 (AASVMVMGWVFAFAAALLPIFGV). The Extracellular segment spans residues 508–527 (SSYMKVSICLPIDIDSPLSQ). Residues 528 to 549 (LYVMALLVLNVLAFVVICGCYT) form a helical membrane-spanning segment. The Cytoplasmic portion of the chain corresponds to 550 to 572 (HIYLTVRNPNIVSSSSDTKIAKR). A helical transmembrane segment spans residues 573–596 (MATLIFTDFLCMAPISLFAISASL). Topologically, residues 597 to 607 (KAPLITVSKAK) are extracellular. A helical membrane pass occupies residues 608-629 (ILLVLFYPINSCANPFLYAIFT). Topologically, residues 630–694 (KNFRRDFFIL…LVPLSQSAHN (65 aa)) are cytoplasmic.

This sequence belongs to the G-protein coupled receptor 1 family. FSH/LSH/TSH subfamily. In terms of assembly, homotrimer. Functions as a homotrimer binding the FSH hormone heterodimer composed of CGA and FSHB. Interacts with ARRB2. Interacts with APPL2; interaction is independent of follicle stimulating hormone stimulation. In terms of processing, N-glycosylated; indirectly required for FSH-binding, possibly via a conformational change that allows high affinity binding of hormone.

The protein resides in the cell membrane. In terms of biological role, g protein-coupled receptor for follitropin, the follicle-stimulating hormone. Through cAMP production activates the downstream PI3K-AKT and ERK1/ERK2 signaling pathways. The chain is Follicle-stimulating hormone receptor (FSHR) from Mesocricetus auratus (Golden hamster).